The following is an 87-amino-acid chain: U3-theraphotoxin-Hhn1a 2 (87 aa).

The signal sequence occupies residues 1-24; that stretch reads MVNMKASMFLTFAGLVLLFVVCYA. Residues 25–52 constitute a propeptide that is removed on maturation; it reads SESEEKEFPKEMLSSIFAVDDDFKQEER. 3 disulfide bridges follow: Cys54/Cys67, Cys61/Cys72, and Cys66/Cys79.

It belongs to the neurotoxin 10 (Hwtx-1) family. 51 (Hntx-8) subfamily. Hntx-8 sub-subfamily. In terms of tissue distribution, expressed by the venom gland.

It localises to the secreted. Functionally, ion channel inhibitor. This Cyriopagopus hainanus (Chinese bird spider) protein is U3-theraphotoxin-Hhn1a 2.